A 459-amino-acid polypeptide reads, in one-letter code: ATP synthase subunit beta (459 aa).

148-155 (GGAGVGKT) is an ATP binding site.

The protein belongs to the ATPase alpha/beta chains family. In terms of assembly, F-type ATPases have 2 components, CF(1) - the catalytic core - and CF(0) - the membrane proton channel. CF(1) has five subunits: alpha(3), beta(3), gamma(1), delta(1), epsilon(1). CF(0) has three main subunits: a(1), b(2) and c(9-12). The alpha and beta chains form an alternating ring which encloses part of the gamma chain. CF(1) is attached to CF(0) by a central stalk formed by the gamma and epsilon chains, while a peripheral stalk is formed by the delta and b chains.

The protein resides in the cell inner membrane. The enzyme catalyses ATP + H2O + 4 H(+)(in) = ADP + phosphate + 5 H(+)(out). In terms of biological role, produces ATP from ADP in the presence of a proton gradient across the membrane. The catalytic sites are hosted primarily by the beta subunits. The protein is ATP synthase subunit beta of Thioalkalivibrio sulfidiphilus (strain HL-EbGR7).